We begin with the raw amino-acid sequence, 129 residues long: 3-aminoacrylate deaminase RutC (129 aa).

It belongs to the RutC family.

It catalyses the reaction (Z)-3-aminoacrylate + H2O + H(+) = 3-oxopropanoate + NH4(+). In terms of biological role, involved in pyrimidine catabolism. Catalyzes the deamination of 3-aminoacrylate to malonic semialdehyde, a reaction that can also occur spontaneously. RutC may facilitate the reaction and modulate the metabolic fitness, rather than catalyzing essential functions. This is 3-aminoacrylate deaminase RutC from Yersinia enterocolitica serotype O:8 / biotype 1B (strain NCTC 13174 / 8081).